The following is a 297-amino-acid chain: N-acetylneuraminate lyase (297 aa).

The aceneuramate site is built by Ser47 and Thr48. Tyr137 acts as the Proton donor in catalysis. The active-site Schiff-base intermediate with substrate is the Lys165. Thr167, Gly189, Asp191, Glu192, and Ser208 together coordinate aceneuramate.

This sequence belongs to the DapA family. NanA subfamily. Homotetramer.

It is found in the cytoplasm. It carries out the reaction aceneuramate = aldehydo-N-acetyl-D-mannosamine + pyruvate. It participates in amino-sugar metabolism; N-acetylneuraminate degradation; D-fructose 6-phosphate from N-acetylneuraminate: step 1/5. Its function is as follows. Catalyzes the reversible aldol cleavage of N-acetylneuraminic acid (sialic acid; Neu5Ac) to form pyruvate and N-acetylmannosamine (ManNAc) via a Schiff base intermediate. The polypeptide is N-acetylneuraminate lyase (Salmonella agona (strain SL483)).